The following is a 308-amino-acid chain: GMP synthase [glutamine-hydrolyzing] subunit B (308 aa).

Positions 1–185 (MNWEKFVEEK…LGLPEKIYNR (185 aa)) constitute a GMPS ATP-PPase domain. 28–34 (SGGVDSS) contacts ATP.

In terms of assembly, heterodimer composed of a glutamine amidotransferase subunit (A) and a GMP-binding subunit (B).

The enzyme catalyses XMP + L-glutamine + ATP + H2O = GMP + L-glutamate + AMP + diphosphate + 2 H(+). Its pathway is purine metabolism; GMP biosynthesis; GMP from XMP (L-Gln route): step 1/1. Its function is as follows. Catalyzes the synthesis of GMP from XMP. This chain is GMP synthase [glutamine-hydrolyzing] subunit B (guaAB), found in Pyrococcus abyssi (strain GE5 / Orsay).